A 417-amino-acid polypeptide reads, in one-letter code: Serine hydroxymethyltransferase (417 aa).

Residues L121 and 125–127 (GHL) each bind (6S)-5,6,7,8-tetrahydrofolate. An N6-(pyridoxal phosphate)lysine modification is found at K229. Residue 355 to 357 (SPF) participates in (6S)-5,6,7,8-tetrahydrofolate binding.

This sequence belongs to the SHMT family. In terms of assembly, homodimer. It depends on pyridoxal 5'-phosphate as a cofactor.

It localises to the cytoplasm. It catalyses the reaction (6R)-5,10-methylene-5,6,7,8-tetrahydrofolate + glycine + H2O = (6S)-5,6,7,8-tetrahydrofolate + L-serine. It functions in the pathway one-carbon metabolism; tetrahydrofolate interconversion. The protein operates within amino-acid biosynthesis; glycine biosynthesis; glycine from L-serine: step 1/1. Catalyzes the reversible interconversion of serine and glycine with tetrahydrofolate (THF) serving as the one-carbon carrier. This reaction serves as the major source of one-carbon groups required for the biosynthesis of purines, thymidylate, methionine, and other important biomolecules. Also exhibits THF-independent aldolase activity toward beta-hydroxyamino acids, producing glycine and aldehydes, via a retro-aldol mechanism. This chain is Serine hydroxymethyltransferase, found in Shewanella sp. (strain ANA-3).